A 252-amino-acid chain; its full sequence is 5'-nucleotidase SurE (252 aa).

Residues aspartate 8, aspartate 9, serine 39, and asparagine 95 each contribute to the a divalent metal cation site.

It belongs to the SurE nucleotidase family. It depends on a divalent metal cation as a cofactor.

Its subcellular location is the cytoplasm. The enzyme catalyses a ribonucleoside 5'-phosphate + H2O = a ribonucleoside + phosphate. Nucleotidase that shows phosphatase activity on nucleoside 5'-monophosphates. The chain is 5'-nucleotidase SurE from Clostridium botulinum (strain Loch Maree / Type A3).